Reading from the N-terminus, the 268-residue chain is WUSCHEL-related homeobox 11 (268 aa).

The disordered stretch occupies residues 1–35 (MDQEQTPHSPTRHSRSPPSSASGSTSAEPVRSRWS). The span at 16-27 (SPPSSASGSTSA) shows a compositional bias: low complexity. The homeobox; WUS-type DNA-binding region spans 29–93 (PVRSRWSPKP…NRRSRSRRRQ (65 aa)).

It belongs to the WUS homeobox family.

It localises to the nucleus. Transcription factor which may be involved in developmental processes. The protein is WUSCHEL-related homeobox 11 (WOX11) of Arabidopsis thaliana (Mouse-ear cress).